Here is a 642-residue protein sequence, read N- to C-terminus: Threonine--tRNA ligase (642 aa).

The TGS domain maps to 1–61; it reads MPVITLPDGS…ETDAELSIIT (61 aa). The tract at residues 243 to 534 is catalytic; the sequence is DHRKIGKQLD…LIEEYAGRFP (292 aa). Positions 334, 385, and 511 each coordinate Zn(2+).

The protein belongs to the class-II aminoacyl-tRNA synthetase family. As to quaternary structure, homodimer. Zn(2+) is required as a cofactor.

The protein localises to the cytoplasm. It catalyses the reaction tRNA(Thr) + L-threonine + ATP = L-threonyl-tRNA(Thr) + AMP + diphosphate + H(+). In terms of biological role, catalyzes the attachment of threonine to tRNA(Thr) in a two-step reaction: L-threonine is first activated by ATP to form Thr-AMP and then transferred to the acceptor end of tRNA(Thr). Also edits incorrectly charged L-seryl-tRNA(Thr). The protein is Threonine--tRNA ligase of Shewanella baltica (strain OS155 / ATCC BAA-1091).